A 281-amino-acid chain; its full sequence is 39kDa core protein OPG130 (281 aa).

Residues 1–22 (MDFFNKFSQGLAESSTPKSSIY) are compositionally biased toward polar residues. 3 disordered regions span residues 1–33 (MDFF…DTKK), 91–112 (ILLP…TSSD), and 149–192 (NKDQ…PQPP). A compositionally biased stretch (basic and acidic residues) spans 24-33 (SEEKDPDTKK). Positions 94-112 (PSSTAPTPKPRQQTNTSSD) are enriched in polar residues. Residues 154 to 175 (TTTPPSTQPSQTLPTTTCTQQS) are compositionally biased toward low complexity.

Belongs to the orthopoxvirus OPG130 family. Interacts with OPG136 and its cleaved form. Post-translationally, its phosphorylation state is regulated by the OPG054 kinase and the OPG106 phosphatase.

Its subcellular location is the virion. The protein localises to the host endoplasmic reticulum-Golgi intermediate compartment membrane. In terms of biological role, component of the virion core. Participates in virion assembly. This Vaccinia virus (strain Copenhagen) (VACV) protein is 39kDa core protein OPG130 (OPG130).